The primary structure comprises 707 residues: Protein MICRORCHIDIA 7 (707 aa).

Basic and acidic residues-rich tracts occupy residues 1–11 (MDNSIHVKREI) and 575–587 (DNRDSSPENDREG). Disordered stretches follow at residues 1-22 (MDNSIHVKREIQLPSTSPAGFP) and 568-619 (EKSA…SGKD). The segment covering 590 to 613 (SIKTPTPASDKFYSSSYPNHNGDN) has biased composition (polar residues). Residues 620–701 (GARLQEELRR…NKIKKMEGSK (82 aa)) are a coiled coil. The Nuclear localization signal motif lies at 633 to 640 (RRKALEVE).

The protein belongs to the MORC ATPase protein family. Homodimer and heterodimer. Component of an RNA-directed DNA methylation (RdDM) complex. Forms homomeric complexes. Requires Mg(2+) as cofactor. Mn(2+) serves as cofactor.

The protein localises to the nucleus. In terms of biological role, exhibits ATPase activity. Binds DNA/RNA in a non-specific manner and exhibits endonuclease activity. Probably involved in DNA repair. Involved in RNA-directed DNA methylation (RdDM) as a component of the RdDM machinery and required for gene silencing. May also be involved in the regulation of chromatin architecture to maintain gene silencing. Together with MORC4, acts to suppress a wide set of non-methylated protein-coding genes, especially involved in pathogen response. Positive regulators of defense against the oomycete Hyaloperonospora arabidopsidis (Hpa). This Arabidopsis thaliana (Mouse-ear cress) protein is Protein MICRORCHIDIA 7.